We begin with the raw amino-acid sequence, 354 residues long: Selection and upkeep of intraepithelial T-cells protein 10 (354 aa).

Residues 1–52 (MFLRTQMEQSQADIFALIKPHFGVMESSASYLPGFFMTFLLLQTTVLTQAMS) form the signal peptide. An Ig-like V-type domain is found at 53–141 (LDIQINIQVP…TNREKKRSVV (89 aa)). Residues 53-158 (LDIQINIQVP…SEYMSLMSNK (106 aa)) are Extracellular-facing. C71 and C125 are oxidised to a cystine. N129 carries N-linked (GlcNAc...) asparagine glycosylation. A helical membrane pass occupies residues 159–179 (FSCPLTYLFIIIFLNCLKGML). Residues 180–209 (DFCCLKGKPVYFRELINKIKEVLNIKMRAC) lie on the Cytoplasmic side of the membrane. A helical transmembrane segment spans residues 210-230 (CTLIWEFLLIVLYIAFLPFYL). At 231–252 (KFRSRASILDDAYPLHSNWLWD) the chain is on the extracellular side. The chain crosses the membrane as a helical span at residues 253 to 273 (ICIVLSVLMIFFTGLSLFLLW). Residues 274 to 354 (TLNCYGQMSY…RLDCSLNWKT (81 aa)) lie on the Cytoplasmic side of the membrane.

It belongs to the SKINT family. As to expression, expressed in skin and thymus.

It is found in the membrane. Functionally, may act by engaging a cell surface molecule on immature T-cells in the embryonic thymus. The chain is Selection and upkeep of intraepithelial T-cells protein 10 (Skint10) from Mus musculus (Mouse).